We begin with the raw amino-acid sequence, 344 residues long: Molybdate/tungstate import ATP-binding protein WtpC (344 aa).

The region spanning 2–231 (LRVESVSKDY…PVDEGVARFL (230 aa)) is the ABC transporter domain. Residue 33 to 40 (GPSGAGKT) participates in ATP binding. Residues 280–344 (KTSARNEFRA…SFKTSAIKVF (65 aa)) form the Mop domain.

This sequence belongs to the ABC transporter superfamily. Sulfate/tungstate importer (TC 3.A.1.6) family. As to quaternary structure, the complex is composed of two ATP-binding proteins (WtpC), two transmembrane proteins (WtpB) and a solute-binding protein (WtpA).

The protein resides in the cell membrane. It catalyses the reaction tungstate(in) + ATP + H2O = tungstate(out) + ADP + phosphate + H(+). Part of the ABC transporter complex WtpABC involved in molybdate/tungstate import. Responsible for energy coupling to the transport system. The polypeptide is Molybdate/tungstate import ATP-binding protein WtpC (wtpC) (Pyrococcus abyssi (strain GE5 / Orsay)).